A 394-amino-acid polypeptide reads, in one-letter code: Elongation factor Tu (394 aa).

The tr-type G domain occupies K10 to V204. Residues G19–T26 form a G1 region. Position 19-26 (G19–T26) interacts with GTP. Position 26 (T26) interacts with Mg(2+). A G2 region spans residues G60 to S64. Residues D81–G84 form a G3 region. GTP is bound by residues D81–H85 and N136–D139. The G4 stretch occupies residues N136 to D139. A G5 region spans residues S174–L176.

The protein belongs to the TRAFAC class translation factor GTPase superfamily. Classic translation factor GTPase family. EF-Tu/EF-1A subfamily. As to quaternary structure, monomer.

It localises to the cytoplasm. The catalysed reaction is GTP + H2O = GDP + phosphate + H(+). Its function is as follows. GTP hydrolase that promotes the GTP-dependent binding of aminoacyl-tRNA to the A-site of ribosomes during protein biosynthesis. This is Elongation factor Tu from Rickettsia peacockii (strain Rustic).